The chain runs to 547 residues: ATP synthase subunit alpha (547 aa).

172–179 (GDRKTGKT) contributes to the ATP binding site.

This sequence belongs to the ATPase alpha/beta chains family. As to quaternary structure, F-type ATPases have 2 components, CF(1) - the catalytic core - and CF(0) - the membrane proton channel. CF(1) has five subunits: alpha(3), beta(3), gamma(1), delta(1), epsilon(1). CF(0) has three main subunits: a(1), b(2) and c(9-12). The alpha and beta chains form an alternating ring which encloses part of the gamma chain. CF(1) is attached to CF(0) by a central stalk formed by the gamma and epsilon chains, while a peripheral stalk is formed by the delta and b chains.

It localises to the cell membrane. It catalyses the reaction ATP + H2O + 4 H(+)(in) = ADP + phosphate + 5 H(+)(out). Functionally, produces ATP from ADP in the presence of a proton gradient across the membrane. The alpha chain is a regulatory subunit. In Rhodococcus opacus (strain B4), this protein is ATP synthase subunit alpha.